The primary structure comprises 262 residues: Global transcriptional regulator CodY (262 aa).

The GAF domain stretch occupies residues 1–159 (MAHLLEKTRK…SSTVVGIQLL (159 aa)). The H-T-H motif DNA-binding region spans 207-226 (ASVIADRIGITRSVIVNALR).

This sequence belongs to the CodY family.

The protein localises to the cytoplasm. Functionally, DNA-binding global transcriptional regulator which is involved in the adaptive response to starvation and acts by directly or indirectly controlling the expression of numerous genes in response to nutrient availability. During rapid exponential growth, CodY is highly active and represses genes whose products allow adaptation to nutrient depletion. This is Global transcriptional regulator CodY from Streptococcus gordonii (strain Challis / ATCC 35105 / BCRC 15272 / CH1 / DL1 / V288).